The chain runs to 1189 residues: Origin recognition complex subunit 1 (1189 aa).

A required for peripherial nuclear localization region spans residues M1–K53. T2 is subject to Phosphothreonine. Position 20 is a phosphoserine (S20). Leucine heptad repeat repeat units follow at residues L137–S143, L144–S150, L151–S157, and L158–E164. Basic residues predominate over residues K239 to H248. 2 disordered regions span residues K239–D421 and D679–L749. Residues Q254–T279 are compositionally biased toward basic and acidic residues. Over residues N304–N320 the composition is skewed to low complexity. Positions T321–H339 are enriched in polar residues. The span at H353–N381 shows a compositional bias: low complexity. Residues N385–H394 are compositionally biased toward basic and acidic residues. Low complexity predominate over residues T395–T411. Residues K695–K709 are compositionally biased toward polar residues. Composition is skewed to basic and acidic residues over residues T710 to E724 and D733 to N742. Residues V780 and G815 to A823 each bind ATP. Positions 903 and 904 each coordinate Mg(2+). E904 is a binding site for ATP. A PIP-box motif is present at residues Q913–W922. ATP contacts are provided by N937 and R1003.

This sequence belongs to the ORC1 family. As to quaternary structure, component of the origin recognition complex (ORC). Interacts (via PIP-box) with PCNA1; the interaction occurs during DNA replication in trophozoites. In schizonts, may be phosphorylated by PK5; phosphorylation leads to ORC1 dissociation from the telomeres and var gene promoters, translocation to the cytoplasm, where it is degraded by the proteasome.

Its subcellular location is the nucleus. The protein resides in the chromosome. The protein localises to the telomere. It localises to the nucleolus. The catalysed reaction is ATP + H2O = ADP + phosphate + H(+). Component of the origin recognition complex (ORC) that binds origins of replication and thus may regulate the initiation of DNA replication. DNA-binding may not be ATP-dependent. In a SIR2A/Sir2-dependent manner, binds to and silences telomers and subtelomeric repeat regions (TAREs). In a SIR2A/Sir2-dependent manner, binds to promoters of var genes localized next to TAREs resulting in their silencing. The chain is Origin recognition complex subunit 1 from Plasmodium falciparum (isolate 3D7).